The primary structure comprises 280 residues: L-proline cis-4-hydroxylase (280 aa).

Residues histidine 106, aspartate 108, and histidine 154 each contribute to the Fe cation site. Arginine 164 is a 2-oxoglutarate binding site.

It belongs to the L-proline cis-4-/cis-3-hydroxylase family. Requires Fe(2+) as cofactor.

It catalyses the reaction L-proline + 2-oxoglutarate + O2 = cis-4-hydroxy-L-proline + succinate + CO2. Its activity is regulated as follows. Inhibited by metal ions such as Co(2+), Zn(2+), Cu(2+) or Ni(2+). Is also inhibited by EDTA or diethylpyrocarbonate (DEPC) in vitro. Unlike the procollagen-proline cis-3- and trans-4-hydroxylases from mammals, does not necessarily require L-ascorbate for activity although it does increase the activity of the enzyme. Dioxygenase that catalyzes the 2-oxoglutarate-dependent selective hydroxylation of free L-proline to cis-4-hydroxy-L-proline (cis-4-Hyp). In Rhizobium meliloti (strain 1021) (Ensifer meliloti), this protein is L-proline cis-4-hydroxylase.